We begin with the raw amino-acid sequence, 429 residues long: Tyrosine-protein kinase STYK1 (429 aa).

The helical transmembrane segment at 30–50 (VIIVPALLVGGFLILLAIILW) threads the bilayer. The segment at 58–83 (SQRQSPGPRGTASVPASRGRSQEAAG) is disordered. In terms of domain architecture, Protein kinase spans 119–390 (LEVLEQIHSG…GQLLQRLEAA (272 aa)). ATP-binding positions include 125-133 (IHSGSCGTL) and lysine 152. Residue aspartate 256 is the Proton acceptor of the active site.

The protein belongs to the protein kinase superfamily. Tyr protein kinase family. As to expression, highly expressed in colon and small intestine. Weakly or not expressed in spleen, skeletal muscle, liver, kidney, heart and brain. Expressed in transformed kidney cell lines (COS-1 and HEK293T).

It is found in the membrane. The catalysed reaction is L-tyrosyl-[protein] + ATP = O-phospho-L-tyrosyl-[protein] + ADP + H(+). Its function is as follows. Probable tyrosine protein-kinase, which has strong transforming capabilities on a variety of cell lines including NIH 3T3 fibroblasts and on athymic nude mice. When overexpressed, it can also induce tumor cell invasion as well as metastasis in distant organs. May act by activating both MAP kinase and phosphatidylinositol 3'-kinases (PI3K) pathways. This Mus musculus (Mouse) protein is Tyrosine-protein kinase STYK1 (Styk1).